A 278-amino-acid chain; its full sequence is Large ribosomal subunit protein uL2 (278 aa).

Disordered regions lie at residues 28-56 (KPVKALTEGKRKSGGRNNQGHATARGIAG) and 221-278 (RGVA…KKKR). Over residues 269-278 (IRSRHAKKKR) the composition is skewed to basic residues.

The protein belongs to the universal ribosomal protein uL2 family. Part of the 50S ribosomal subunit. Forms a bridge to the 30S subunit in the 70S ribosome.

One of the primary rRNA binding proteins. Required for association of the 30S and 50S subunits to form the 70S ribosome, for tRNA binding and peptide bond formation. It has been suggested to have peptidyltransferase activity; this is somewhat controversial. Makes several contacts with the 16S rRNA in the 70S ribosome. This chain is Large ribosomal subunit protein uL2, found in Rhizorhabdus wittichii (strain DSM 6014 / CCUG 31198 / JCM 15750 / NBRC 105917 / EY 4224 / RW1) (Sphingomonas wittichii).